We begin with the raw amino-acid sequence, 65 residues long: Beta-defensin 17 (65 aa).

The signal sequence occupies residues 1–19 (MKFHLLFFILLFSITILTG). 3 disulfides stabilise this stretch: cysteine 35/cysteine 63, cysteine 42/cysteine 56, and cysteine 46/cysteine 64.

It belongs to the beta-defensin family.

It localises to the secreted. In terms of biological role, has antibacterial activity. The sequence is that of Beta-defensin 17 (Defb17) from Rattus norvegicus (Rat).